A 156-amino-acid chain; its full sequence is Small ribosomal subunit protein uS7 (156 aa).

It belongs to the universal ribosomal protein uS7 family. As to quaternary structure, part of the 30S ribosomal subunit. Contacts proteins S9 and S11.

Functionally, one of the primary rRNA binding proteins, it binds directly to 16S rRNA where it nucleates assembly of the head domain of the 30S subunit. Is located at the subunit interface close to the decoding center, probably blocks exit of the E-site tRNA. In Synechococcus sp. (strain WH7803), this protein is Small ribosomal subunit protein uS7.